The chain runs to 485 residues: UDP-N-acetylmuramate--L-alanine ligase (485 aa).

120-126 is an ATP binding site; sequence GSHGKTT.

The protein belongs to the MurCDEF family.

The protein resides in the cytoplasm. The catalysed reaction is UDP-N-acetyl-alpha-D-muramate + L-alanine + ATP = UDP-N-acetyl-alpha-D-muramoyl-L-alanine + ADP + phosphate + H(+). It functions in the pathway cell wall biogenesis; peptidoglycan biosynthesis. Its function is as follows. Cell wall formation. The polypeptide is UDP-N-acetylmuramate--L-alanine ligase (Rickettsia peacockii (strain Rustic)).